The primary structure comprises 408 residues: Snake venom metalloproteinase BaP1 (408 aa).

A signal peptide spans 1–20 (MIEVLLVTICLAVFPYQGSS). A propeptide spanning residues 21-191 (IILESGNVND…KASQSNLTPE (171 aa)) is cleaved from the precursor. Gln192 is modified (pyrrolidone carboxylic acid). The region spanning 198–394 (RYIELAVVAD…HNPQCILNKP (197 aa)) is the Peptidase M12B domain. Cystine bridges form between Cys309-Cys389, Cys349-Cys373, and Cys351-Cys356. Zn(2+) is bound at residue His334. The active site involves Glu335. Zn(2+)-binding residues include His338 and His344. Positions 395-408 (LLTVSGNELLEAGE) are excised as a propeptide.

This sequence belongs to the venom metalloproteinase (M12B) family. P-I subfamily. In terms of assembly, monomer. Zn(2+) is required as a cofactor. As to expression, expressed by the venom gland.

It localises to the secreted. Inhibited by EDTA, partially inhibited by o-phenantropine, and not inhibited by PMSF, pepstatin A, and aprotinin. Zinc metalloprotease that exhibits a weak hemorrhagic activity (with a minimum hemorrhagic dose of 20 ug by intradermal and intramuscular injection into mice). The basal membrane components collagen (all chains of type IV) (COL4A4), laminin and nidogen are all degraded by this toxin. Rapidly degrades the Aalpha-chain (FGA) of fibrinogen, and later on, degrades the Bbeta-chain (FGB) of fibrinogen. Also activates the complement system, and induces rat neutrophil chemotaxis. Induces edema in mouse food pad and shows a mild myotoxicity. The protein is Snake venom metalloproteinase BaP1 of Bothrops asper (Terciopelo).